The chain runs to 1115 residues: Iron-regulated protein FrpA (1115 aa).

Hemolysin-type calcium-binding repeat units lie at residues F755–L772, I773–Y790, N901–L918, N919–L936, D937–L954, N955–L972, and I973–Y990.

Belongs to the RTX prokaryotic toxin (TC 1.C.11) family.

Its subcellular location is the cell outer membrane. It localises to the secreted. In terms of biological role, may participate in the pathogenesis of meningococcal disease. The sequence is that of Iron-regulated protein FrpA (frpA) from Neisseria meningitidis serogroup C.